We begin with the raw amino-acid sequence, 208 residues long: V-type proton ATPase subunit E (208 aa).

Belongs to the V-ATPase E subunit family.

Its function is as follows. Produces ATP from ADP in the presence of a proton gradient across the membrane. This is V-type proton ATPase subunit E from Chlamydia trachomatis serovar L2 (strain ATCC VR-902B / DSM 19102 / 434/Bu).